We begin with the raw amino-acid sequence, 428 residues long: Type II methyltransferase M.BanI (428 aa).

The region spanning 3–417 is the SAM-dependent MTase C5-type domain; the sequence is IKFVDLFAGI…EDLFQNNVNE (415 aa). C76 is a catalytic residue.

This sequence belongs to the class I-like SAM-binding methyltransferase superfamily. C5-methyltransferase family. As to quaternary structure, monomer.

The enzyme catalyses a 2'-deoxycytidine in DNA + S-adenosyl-L-methionine = a 5-methyl-2'-deoxycytidine in DNA + S-adenosyl-L-homocysteine + H(+). In terms of biological role, a methylase, recognizes the double-stranded sequence 5'-GGYRCC-3', methylates C-4 on both strands, and protects the DNA from cleavage by the BanI endonuclease. This chain is Type II methyltransferase M.BanI (banIM), found in Aneurinibacillus aneurinilyticus (Bacillus aneurinolyticus).